Here is a 366-residue protein sequence, read N- to C-terminus: Transmembrane protein 25 (366 aa).

A signal peptide spans 1–26 (MALPPGPAALRHTLLLLPALLSSGWG). The Extracellular segment spans residues 27–232 (ELEPQIDGQT…APGLLATRVE (206 aa)). The 94-residue stretch at 30–123 (PQIDGQTWAE…SGRSANASVI (94 aa)) folds into the Ig-like domain. Residues Cys-52 and Cys-107 are joined by a disulfide bond. 5 N-linked (GlcNAc...) asparagine glycosylation sites follow: Asn-106, Asn-162, Asn-175, Asn-192, and Asn-205. A helical transmembrane segment spans residues 233-253 (VPLLGIVVAAGLALGTLVGFS). Residues 254-366 (TLVACLVCRK…SSVSSDEIWL (113 aa)) are Cytoplasmic-facing. Polar residues predominate over residues 299–308 (PSNLQLNDLT). Residues 299–335 (PSNLQLNDLTPDSRAVKPADRQMAQNNSRPELLDPEP) are disordered.

In terms of assembly, interacts with GRIN2B. In terms of tissue distribution, expressed throughout the brain with higher levels in the pyramidal cell layer of the hippocampal CA1 and CA3 regions. Also highly expressed within the hippocampal dentate gyrus region and cerebellum and in scattered neurons in the cerebral cortex.

The protein resides in the cell membrane. It is found in the secreted. Its subcellular location is the late endosome. It localises to the lysosome. Its function is as follows. In neurons, modulates the degradation of NMDA receptor GRIN2B subunit. Plays a role in the regulation of neuronal excitability. In Homo sapiens (Human), this protein is Transmembrane protein 25 (TMEM25).